A 119-amino-acid polypeptide reads, in one-letter code: Holo-[acyl-carrier-protein] synthase (119 aa).

Mg(2+) is bound by residues aspartate 8 and glutamate 58.

This sequence belongs to the P-Pant transferase superfamily. AcpS family. Mg(2+) serves as cofactor.

Its subcellular location is the cytoplasm. It catalyses the reaction apo-[ACP] + CoA = holo-[ACP] + adenosine 3',5'-bisphosphate + H(+). Functionally, transfers the 4'-phosphopantetheine moiety from coenzyme A to a Ser of acyl-carrier-protein. This is Holo-[acyl-carrier-protein] synthase from Limosilactobacillus fermentum (strain NBRC 3956 / LMG 18251) (Lactobacillus fermentum).